A 311-amino-acid chain; its full sequence is Aspartate carbamoyltransferase catalytic subunit (311 aa).

Residues R55 and T56 each coordinate carbamoyl phosphate. K83 provides a ligand contact to L-aspartate. Carbamoyl phosphate is bound by residues R105, H134, and Q137. L-aspartate-binding residues include R167 and R226. Carbamoyl phosphate-binding residues include G267 and P268.

It belongs to the aspartate/ornithine carbamoyltransferase superfamily. ATCase family. In terms of assembly, heterododecamer (2C3:3R2) of six catalytic PyrB chains organized as two trimers (C3), and six regulatory PyrI chains organized as three dimers (R2).

It carries out the reaction carbamoyl phosphate + L-aspartate = N-carbamoyl-L-aspartate + phosphate + H(+). It functions in the pathway pyrimidine metabolism; UMP biosynthesis via de novo pathway; (S)-dihydroorotate from bicarbonate: step 2/3. Its function is as follows. Catalyzes the condensation of carbamoyl phosphate and aspartate to form carbamoyl aspartate and inorganic phosphate, the committed step in the de novo pyrimidine nucleotide biosynthesis pathway. The polypeptide is Aspartate carbamoyltransferase catalytic subunit (Corynebacterium jeikeium (strain K411)).